Consider the following 415-residue polypeptide: MSAPSESSETAAPLLSDLSPEEQKGVQQVREIYRALLDSFKFKNEYNAYDPLNNTIITQHGSYEVPEAFAQCTYLAQIYVSYKINSLPYQTYIKDLEWISPAEVYKLIMERLQKNKYFLRKQVQAMEKIKVLLCPSPELLENNYVDDNLKISSHKVTQRHPEKVYDLMTYQEIADGIDDFFSLLEMPNLSLAFVNKTSIKLNISCSGANNHIGSFIGRTARTIRHYWIKNAILEFADYKKKTVPYPFVGPPRDPGLFEHIVDDCSTGAPINWDDFSIDSYASYVTVMEHLEEVVELTDRHRRVIEYLGMYIASDLHEEGKLTRARKLDRTTLFHTVRDVLLHDGSYTRHKGVRCLDNGSVRVSIRLKHRQLTATWIELEPIIENGEVKDVMFKLSTRVQYTEENENETRPESSSE.

In terms of biological role, plasmid partition require REP1, REP2, and a cis-acting DNA sequence (known as STB). REP1 may act by intercalating in the yeast nuclear matrix and binding STB either directly or via REP2. This is Trans-acting factor B (B) from Kluyveromyces lactis (Yeast).